We begin with the raw amino-acid sequence, 531 residues long: Light-independent protochlorophyllide reductase subunit B (531 aa).

Position 36 (aspartate 36) interacts with [4Fe-4S] cluster. The active-site Proton donor is the aspartate 296. Residue 431 to 432 (GM) participates in substrate binding.

It belongs to the ChlB/BchB/BchZ family. Protochlorophyllide reductase is composed of three subunits; ChlL, ChlN and ChlB. Forms a heterotetramer of two ChlB and two ChlN subunits. [4Fe-4S] cluster serves as cofactor.

The protein localises to the plastid. Its subcellular location is the chloroplast. It catalyses the reaction chlorophyllide a + oxidized 2[4Fe-4S]-[ferredoxin] + 2 ADP + 2 phosphate = protochlorophyllide a + reduced 2[4Fe-4S]-[ferredoxin] + 2 ATP + 2 H2O. The protein operates within porphyrin-containing compound metabolism; chlorophyll biosynthesis (light-independent). In terms of biological role, component of the dark-operative protochlorophyllide reductase (DPOR) that uses Mg-ATP and reduced ferredoxin to reduce ring D of protochlorophyllide (Pchlide) to form chlorophyllide a (Chlide). This reaction is light-independent. The NB-protein (ChlN-ChlB) is the catalytic component of the complex. The protein is Light-independent protochlorophyllide reductase subunit B of Nephroselmis olivacea (Green alga).